The following is a 274-amino-acid chain: Thiamine kinase (274 aa).

Belongs to the thiamine kinase family.

It catalyses the reaction thiamine + ATP = thiamine phosphate + ADP + H(+). The protein operates within cofactor biosynthesis; thiamine diphosphate biosynthesis; thiamine phosphate from thiamine: step 1/1. Its function is as follows. Catalyzes the ATP-dependent phosphorylation of thiamine to thiamine phosphate. Is involved in thiamine salvage. This chain is Thiamine kinase, found in Salmonella paratyphi A (strain ATCC 9150 / SARB42).